Reading from the N-terminus, the 372-residue chain is Protein REVEILLE 7 (372 aa).

Residues 71 to 125 (TVTKQREKWSEEEHDRFLEAIKLYGRGWRQIQEHIGTKTAVQIRSHAQKFFSKMA) enclose the HTH myb-type domain. Positions 98–121 (WRQIQEHIGTKTAVQIRSHAQKFF) form a DNA-binding region, H-T-H motif. The tract at residues 124-204 (MAQEADSRSE…RCSSPNSCTS (81 aa)) is disordered. Residues 145 to 155 (RPKRKPAHPYP) are compositionally biased toward basic residues. The segment covering 156 to 169 (RKSPVPYTQSPPPN) has biased composition (pro residues). Residues 178-204 (KSPTSVLSSFGSEDQVNRCSSPNSCTS) show a composition bias toward polar residues.

The protein localises to the nucleus. Its function is as follows. Transcription factor involved in phytochrome A-mediated cotyledon opening. Controlled by the central oscillator mediated by LHY and CCA1. Part of a regulatory circadian feedback loop. Regulates its own expression. This Arabidopsis thaliana (Mouse-ear cress) protein is Protein REVEILLE 7 (RVE7).